The primary structure comprises 160 residues: Cytochrome b6-f complex subunit 4 (160 aa).

The next 3 helical transmembrane spans lie at 36 to 56 (LLYI…GLAV), 95 to 115 (LLGI…PFIE), and 131 to 151 (SVFL…CLPI).

The protein belongs to the cytochrome b family. PetD subfamily. As to quaternary structure, the 4 large subunits of the cytochrome b6-f complex are cytochrome b6, subunit IV (17 kDa polypeptide, PetD), cytochrome f and the Rieske protein, while the 4 small subunits are PetG, PetL, PetM and PetN. The complex functions as a dimer.

It is found in the cellular thylakoid membrane. In terms of biological role, component of the cytochrome b6-f complex, which mediates electron transfer between photosystem II (PSII) and photosystem I (PSI), cyclic electron flow around PSI, and state transitions. This chain is Cytochrome b6-f complex subunit 4, found in Prochlorococcus marinus subsp. pastoris (strain CCMP1986 / NIES-2087 / MED4).